The sequence spans 437 residues: Serine--tRNA ligase (437 aa).

Residue 227–229 coordinates L-serine; that stretch reads TAE. ATP is bound by residues 258–260 and Val-274; that span reads RSE. Residue Glu-281 participates in L-serine binding. 347–350 lines the ATP pocket; sequence ETHS. Position 382 (Thr-382) interacts with L-serine.

Belongs to the class-II aminoacyl-tRNA synthetase family. Type-1 seryl-tRNA synthetase subfamily. Homodimer. The tRNA molecule binds across the dimer.

The protein resides in the cytoplasm. The enzyme catalyses tRNA(Ser) + L-serine + ATP = L-seryl-tRNA(Ser) + AMP + diphosphate + H(+). It catalyses the reaction tRNA(Sec) + L-serine + ATP = L-seryl-tRNA(Sec) + AMP + diphosphate + H(+). Its pathway is aminoacyl-tRNA biosynthesis; selenocysteinyl-tRNA(Sec) biosynthesis; L-seryl-tRNA(Sec) from L-serine and tRNA(Sec): step 1/1. Functionally, catalyzes the attachment of serine to tRNA(Ser). Is also able to aminoacylate tRNA(Sec) with serine, to form the misacylated tRNA L-seryl-tRNA(Sec), which will be further converted into selenocysteinyl-tRNA(Sec). The protein is Serine--tRNA ligase of Deinococcus geothermalis (strain DSM 11300 / CIP 105573 / AG-3a).